Reading from the N-terminus, the 191-residue chain is MTGDVDMSLHPSGIIPELQNVVSTVNLGCTLELKEIAMQARNAEYNPKRFAAVIMRIRDPKTTALIFGSGKMVCTGAKSEQDSRTAARKYAKIVQKLGFPAKFTEFKIQNIVGSCDVKFPIRMEPLAYQHQQFCSYEPELFPGLIYRMLQPKIVLLIFVSGKVVLTGAKERTEIYRAFEQIYPVLTQFRKR.

2 repeat units span residues 18–94 (LQNV…AKIV) and 108–185 (IQNI…YPVL).

It belongs to the TBP family. Belongs to the TFIID complex together with the TBP-associated factors (TAFs). Binds DNA as monomer.

The protein localises to the nucleus. General transcription factor that functions at the core of the DNA-binding multiprotein factor TFIID. Binding of TFIID to the TATA box is the initial transcriptional step of the pre-initiation complex (PIC), playing a role in the activation of eukaryotic genes transcribed by RNA polymerase II. The sequence is that of TATA-box-binding protein from Acetabularia peniculus (Green alga).